The following is a 96-amino-acid chain: Large ribosomal subunit protein uL23 (96 aa).

It belongs to the universal ribosomal protein uL23 family. As to quaternary structure, part of the 50S ribosomal subunit. Contacts protein L29, and trigger factor when it is bound to the ribosome.

Its function is as follows. One of the early assembly proteins it binds 23S rRNA. One of the proteins that surrounds the polypeptide exit tunnel on the outside of the ribosome. Forms the main docking site for trigger factor binding to the ribosome. This chain is Large ribosomal subunit protein uL23, found in Solidesulfovibrio magneticus (strain ATCC 700980 / DSM 13731 / RS-1) (Desulfovibrio magneticus).